The chain runs to 432 residues: Cyclic 2,3-diphosphoglycerate synthetase (432 aa).

Belongs to the cyclic 2,3-diphosphoglycerate synthetase family.

The protein resides in the cytoplasm. The enzyme catalyses (2R)-2,3-bisphosphoglycerate + ATP + H(+) = cyclic (2R)-2,3-bisphosphoglycerate + ADP + phosphate. Catalyzes the formation of cyclic 2,3-diphosphoglycerate (cDPG) by formation of an intramolecular phosphoanhydride bond at the expense of ATP. This is Cyclic 2,3-diphosphoglycerate synthetase from Thermococcus onnurineus (strain NA1).